The sequence spans 227 residues: MSKDYEVFPLLLEMAKRGCLVAPRRLSRIEILKTLGLTPWRFKKLVEAAEEEGYIERRVHGRMVFYVVTERGRALLRRVYDDLKRTIDSSTFLTLRGYVVPGLGEGAIYMGIPRYVEAFKEVLGYEPYPGTLNIKLVDEDVYLRRALREKRVGFRIEGFRLDEGRESCGVTVYKAMIMANGVTVSGAALDIDKTKHGDEILELIAPVRLRDELRLKDGDKVEVVIPV.

Residues 1–92 (MSKDYEVFPL…LKRTIDSSTF (92 aa)) form an H-T-H motif-like region. Positions 93 to 227 (LTLRGYVVPG…GDKVEVVIPV (135 aa)) are riboflavin kinase. 102–107 (GLGEGA) contributes to the CDP binding site. 2 residues coordinate Mg(2+): threonine 131 and asparagine 133. Residues threonine 194 and glutamate 202 each coordinate FMN. 207-210 (VRLR) serves as a coordination point for CDP.

It belongs to the archaeal riboflavin kinase family. Mg(2+) is required as a cofactor.

It carries out the reaction riboflavin + CTP = CDP + FMN + H(+). It participates in cofactor biosynthesis; FMN biosynthesis; FMN from riboflavin (CTP route): step 1/1. Catalyzes the CTP-dependent phosphorylation of riboflavin (vitamin B2) to form flavin mononucleotide (FMN). The chain is Riboflavin kinase (ribK) from Thermofilum pendens (strain DSM 2475 / Hrk 5).